Consider the following 341-residue polypeptide: DNA-directed RNA polymerase subunit alpha (341 aa).

The interval 1–233 (MVREEVPVST…DLFIPFLHAE (233 aa)) is alpha N-terminal domain (alpha-NTD). The interval 266–341 (IILKRIFIDQ…LKNSNQFESR (76 aa)) is alpha C-terminal domain (alpha-CTD).

It belongs to the RNA polymerase alpha chain family. In terms of assembly, in plastids the minimal PEP RNA polymerase catalytic core is composed of four subunits: alpha, beta, beta', and beta''. When a (nuclear-encoded) sigma factor is associated with the core the holoenzyme is formed, which can initiate transcription.

The protein resides in the plastid. Its subcellular location is the chloroplast. It catalyses the reaction RNA(n) + a ribonucleoside 5'-triphosphate = RNA(n+1) + diphosphate. DNA-dependent RNA polymerase catalyzes the transcription of DNA into RNA using the four ribonucleoside triphosphates as substrates. This Nymphaea alba (White water-lily) protein is DNA-directed RNA polymerase subunit alpha.